The sequence spans 1320 residues: Tetratricopeptide repeat protein 21A (1320 aa).

TPR repeat units follow at residues 4 to 38 (NDSSLMAGIIYYSQEKYFHHVQQAAAVGLEKFSND), 110 to 143 (GTALYYAGLFLWLIGRHDKAKEYIDRMLKISRGF), 146 to 180 (AYVLRGWVDLTSDKPHTAKKAIEYLEQGIQDTKDV), 181 to 213 (LGLMGKAMYFMMQQNYSEALEVVNQITVTSGSF), 215 to 247 (PALVLKMQLFLARQDWEQTVEMGHRILEKDESN), 334 to 367 (VHVATELGYLFILKNQVKEALLWYSEAMKLDKDG), 502 to 534 (IDPLYLMAQVRYYSELENAQSILQRCLELDPAS), 572 to 605 (PLYHLIKARALNKAGDYPEAIKTLKMVIKLPALK), 728 to 761 (PHTSLLLGDALMSILEPEKALEVYDEAYRQNPHD), 762 to 795 (ASLASRIGHAYVKAHQYTEAIEYYEAAQKINGQD), 797 to 828 (LCCDLGKLLLKLKKVNKAEKVLKQALEHDIVQ), 837 to 869 (VKCLLLLAKVYKSHKKEAVIETLNKALDLQSRI), 889 to 922 (ASICIQFAEHYLAEKEYDKAVQSYKDVFSYLPTD), 924 to 956 (KVMLELAQLYLLQGHLDLCEQHCAILLQTEQNH), 957 to 990 (ETASVLMADLMFRKQKHEAAINLYHQVLEKAPDN), 1028 to 1061 (PGFNYCRGIYCWHIGQPNEALKFLNKARKDSTWG), 1201 to 1234 (EKSWLLLADIYCQGSKFDLALELLRRCVQYNKSC), 1236 to 1268 (KAYEYMGFIMEKEQSYKDAVTNYKLAWKYSHHA), and 1270 to 1303 (PAIGFKLAFNYLKDKKFVEAIEICNDVLREHPDY).

It belongs to the TTC21 family. As to quaternary structure, interacts with IFT20. Interacts with IFT52. Interacts with IFT140. Interacts with CEP78; regulating IFT20 stability and localization. As to expression, strongly expressed in testis.

Functionally, intraflagellar transport (IFT)-associated protein required for spermatogenesis. Required for sperm flagellar formation and intraflagellar transport. The polypeptide is Tetratricopeptide repeat protein 21A (Homo sapiens (Human)).